The primary structure comprises 519 residues: 2-isopropylmalate synthase (519 aa).

One can recognise a Pyruvate carboxyltransferase domain in the interval 12-274 (VVIFDTTLRD…WCNVESTMLT (263 aa)). 4 residues coordinate Mn(2+): aspartate 21, histidine 209, histidine 211, and asparagine 245. The segment at 398 to 519 (KLSSLTVIAG…QRDVPAAAAS (122 aa)) is regulatory domain.

Belongs to the alpha-IPM synthase/homocitrate synthase family. LeuA type 1 subfamily. Homodimer. Mn(2+) is required as a cofactor.

It localises to the cytoplasm. The enzyme catalyses 3-methyl-2-oxobutanoate + acetyl-CoA + H2O = (2S)-2-isopropylmalate + CoA + H(+). The protein operates within amino-acid biosynthesis; L-leucine biosynthesis; L-leucine from 3-methyl-2-oxobutanoate: step 1/4. Catalyzes the condensation of the acetyl group of acetyl-CoA with 3-methyl-2-oxobutanoate (2-ketoisovalerate) to form 3-carboxy-3-hydroxy-4-methylpentanoate (2-isopropylmalate). The protein is 2-isopropylmalate synthase of Nitrobacter winogradskyi (strain ATCC 25391 / DSM 10237 / CIP 104748 / NCIMB 11846 / Nb-255).